The chain runs to 180 residues: Cancer/testis antigen 1 (180 aa).

2 stretches are compositionally biased toward gly residues: residues 1–47 (MQAE…GPRG) and 55–66 (GPGGGAPRGPHG). The segment at 1-66 (MQAEGRGTGG…GGGAPRGPHG (66 aa)) is disordered.

Belongs to the CTAG/PCC1 family. In terms of tissue distribution, expressed in testis and ovary and in a wide variety of cancers. Detected in uterine myometrium. Expressed from 18 weeks until birth in human fetal testis. In the adult testis, is strongly expressed in spermatogonia and in primary spermatocytes, but not in post-meiotic cells or in testicular somatic cells (at protein level).

Its subcellular location is the cytoplasm. This is Cancer/testis antigen 1 (CTAG1A) from Homo sapiens (Human).